The chain runs to 509 residues: Maturase K (509 aa).

Belongs to the intron maturase 2 family. MatK subfamily.

The protein localises to the plastid. The protein resides in the chloroplast. In terms of biological role, usually encoded in the trnK tRNA gene intron. Probably assists in splicing its own and other chloroplast group II introns. In Nicotiana glutinosa (Tobacco), this protein is Maturase K.